We begin with the raw amino-acid sequence, 317 residues long: MTTQLDSLRNMTVVVADTGDIEAIKKYQPEDATTNPSLILSASALPQYASLIDEAIAYAKSKSNCSKQQLIDAEDKLAVNIGLEILKIVPGRISTEVDARLSYDTQATIEKAKKLIALYNEAGISNDRILIKIASTWQGIRAAEELEKQGINCNLTLLFSEAQARACAEAGVYLISPFVGRILDWYKANSDKKDYAPAEDPGVISVTKIYNYYKQHGYNTIVMGASFRNVGEITELAGCDRLTIAPALLKELQENNAPLERKLSYTGEVKAKPQPLTEAEFYWQHNSDAMAVEKLADGIRKFAADQEKLEAMLLTKF.

The Schiff-base intermediate with substrate role is filled by Lys132.

The protein belongs to the transaldolase family. Type 1 subfamily. Homodimer.

The protein resides in the cytoplasm. The enzyme catalyses D-sedoheptulose 7-phosphate + D-glyceraldehyde 3-phosphate = D-erythrose 4-phosphate + beta-D-fructose 6-phosphate. It functions in the pathway carbohydrate degradation; pentose phosphate pathway; D-glyceraldehyde 3-phosphate and beta-D-fructose 6-phosphate from D-ribose 5-phosphate and D-xylulose 5-phosphate (non-oxidative stage): step 2/3. In terms of biological role, transaldolase is important for the balance of metabolites in the pentose-phosphate pathway. The protein is Transaldolase A (talA) of Pasteurella multocida (strain Pm70).